We begin with the raw amino-acid sequence, 211 residues long: Large ribosomal subunit protein uL4 (211 aa).

Positions 50-77 are disordered; sequence STLTKGEVSGGGKKPYKQKHTGKARQGS. Basic residues predominate over residues 63-72; that stretch reads KPYKQKHTGK.

It belongs to the universal ribosomal protein uL4 family. In terms of assembly, part of the 50S ribosomal subunit.

Functionally, one of the primary rRNA binding proteins, this protein initially binds near the 5'-end of the 23S rRNA. It is important during the early stages of 50S assembly. It makes multiple contacts with different domains of the 23S rRNA in the assembled 50S subunit and ribosome. In terms of biological role, forms part of the polypeptide exit tunnel. This is Large ribosomal subunit protein uL4 from Mycoplasma genitalium (strain ATCC 33530 / DSM 19775 / NCTC 10195 / G37) (Mycoplasmoides genitalium).